The primary structure comprises 291 residues: MYSTATQSSPSLAGVKNIVLVLSGKGGVGKSSVTTQLALTLAAQGKKVGVLDIDLTGPSIPRFFGMEDKQVYQSSAGWVPVYTDASRNLCLMSLGFLLSSRGDSVVWRGPRKTAMIRQFIRDVVWGELDYLLIDTPPGTSDEHISIAEELRFCDQILGAVIVTTPQGVALADVRKELSFCKKIGFPILGIIENMSGYVCPHCSECQNIFSKGGGENLAKQYECKFLGTVPIDPKFVLMVENAKGGLQEIYGETDMAKIFAGICDKAFSEENEEEAKETAEEEKSRAATNGQ.

An ATP-binding site is contributed by glycine 24 to serine 31. [4Fe-4S] cluster is bound by residues cysteine 199 and cysteine 202. Residues glutamate 270–glutamine 291 are disordered. Residues lysine 276 to arginine 285 show a composition bias toward basic and acidic residues.

The protein belongs to the Mrp/NBP35 ATP-binding proteins family. NUBP2/CFD1 subfamily. As to quaternary structure, heterotetramer of 2 NBP35 and 2 CFD1 chains. The cofactor is [4Fe-4S] cluster.

The protein localises to the cytoplasm. In terms of biological role, component of the cytosolic iron-sulfur (Fe/S) protein assembly (CIA) machinery. Required for maturation of extramitochondrial Fe-S proteins. The NBP35-CFD1 heterotetramer forms a Fe-S scaffold complex, mediating the de novo assembly of an Fe-S cluster and its transfer to target apoproteins. Required for biogenesis and export of both ribosomal subunits, which may reflect a role in assembly of the Fe/S clusters in RLI1, a protein which performs rRNA processing and ribosome export. In Yarrowia lipolytica (strain CLIB 122 / E 150) (Yeast), this protein is Cytosolic Fe-S cluster assembly factor CFD1.